The primary structure comprises 741 residues: MVELDADLDHIVPSVLPPFWAKLVVGFVSLLCFARSYDGDFVFDDSEAIVNNKDLQSDTPLGDLWHHDFWGSKLSSNTSHKSYRPLTVLTFRINYYLSGGFHPVGFHVVNILLHGSISILMLDVFSVLFGGLQYTGKGQRVHLAPRASLLATLLFAVHPVHTECVAGVVGRADLLCALFFLLSFLGYCQAFKETGNKEGTHSSTFWVLLSIFLGAVAMLCKEQGITVLGLNAVFDILVIGKLDILAAVRKVLHKDKSQENAGMFKNGGLLFRIALLTIGGTSMLYIRWKIMGTGPPAFTEVDNPASFADSMLVRAINYNYYYSLNAWLLLCPWWLCFDWSMGCIPLIKSVGDWRVIALAALWLCLIGLIFQALCSEDSCKRRILTLGLGFLVIPFLPASNLFFRVGFVVAERVLYLPSAGYCVLLTFGFGALSRHTKKKKPVAAIILGILLINALRCVIRSGEWRSEEQLFRSALSVCPLNAKVHYNIGKNLADQGNQTAAIKYYREAVRLNPKYVHAMNNLGNILKERNELQEAEELLSLAVQIQPDFAAAWMNLGIVQNSLKRFEEAEQSYRTAIKHRRKYPDCYYNLGRLYADLNRHVDALNAWRNATVLKPEHSLAWNNMIILLDNTGNLAQAEAVGREALQLIPNDHSLMFSLANVLGKSQKYKESEALFLKAIKANPNVASYHGNLAVLYHRWGHLDSAKKHYEISLQLDPVAVGTKENYSLLRRKLEQTQKKDV.

Residues 1–10 (MVELDADLDH) are Cytoplasmic-facing. A helical transmembrane segment spans residues 11–31 (IVPSVLPPFWAKLVVGFVSLL). Topologically, residues 32–110 (CFARSYDGDF…FHPVGFHVVN (79 aa)) are extracellular. N-linked (GlcNAc...) asparagine glycosylation is present at Asn-77. Residues 111–131 (ILLHGSISILMLDVFSVLFGG) traverse the membrane as a helical segment. Residues 132 to 146 (LQYTGKGQRVHLAPR) are Cytoplasmic-facing. The next 2 membrane-spanning stretches (helical) occupy residues 147-166 (ASLLATLLFAVHPVHTECVA) and 167-185 (GVVGRADLLCALFFLLSFL). Residues 186–198 (GYCQAFKETGNKE) lie on the Cytoplasmic side of the membrane. The helical transmembrane segment at 199–219 (GTHSSTFWVLLSIFLGAVAML) threads the bilayer. Residues 220-224 (CKEQG) are Extracellular-facing. The chain crosses the membrane as a helical span at residues 225 to 245 (ITVLGLNAVFDILVIGKLDIL). Topologically, residues 246 to 265 (AAVRKVLHKDKSQENAGMFK) are cytoplasmic. Residues 266 to 286 (NGGLLFRIALLTIGGTSMLYI) form a helical membrane-spanning segment. Topologically, residues 287–354 (RWKIMGTGPP…PLIKSVGDWR (68 aa)) are extracellular. The helical transmembrane segment at 355-375 (VIALAALWLCLIGLIFQALCS) threads the bilayer. Residues 376-382 (EDSCKRR) lie on the Cytoplasmic side of the membrane. The chain crosses the membrane as a helical span at residues 383-403 (ILTLGLGFLVIPFLPASNLFF). Residues 404 to 412 (RVGFVVAER) are Extracellular-facing. The helical transmembrane segment at 413 to 433 (VLYLPSAGYCVLLTFGFGALS) threads the bilayer. Residues 434 to 441 (RHTKKKKP) lie on the Cytoplasmic side of the membrane. A helical membrane pass occupies residues 442 to 462 (VAAIILGILLINALRCVIRSG). Over 463 to 741 (EWRSEEQLFR…KLEQTQKKDV (279 aa)) the chain is Extracellular. TPR repeat units lie at residues 482–515 (AKVHYNIGKNLADQGNQTAAIKYYREAVRLNPKY), 516–549 (VHAMNNLGNILKERNELQEAEELLSLAVQIQPDF), 550–583 (AAAWMNLGIVQNSLKRFEEAEQSYRTAIKHRRKY), 584–617 (PDCYYNLGRLYADLNRHVDALNAWRNATVLKPEH), 618–651 (SLAWNNMIILLDNTGNLAQAEAVGREALQLIPND), 652–685 (HSLMFSLANVLGKSQKYKESEALFLKAIKANPNV), and 686–719 (ASYHGNLAVLYHRWGHLDSAKKHYEISLQLDPVA). Residue Asn-497 is glycosylated (N-linked (GlcNAc...) asparagine). The N-linked (GlcNAc...) asparagine glycan is linked to Asn-609. A glycan (N-linked (GlcNAc...) asparagine) is linked at Asn-725.

This sequence belongs to the TMTC family.

Its subcellular location is the membrane. The protein localises to the endoplasmic reticulum. The enzyme catalyses a di-trans,poly-cis-dolichyl beta-D-mannosyl phosphate + L-seryl-[protein] = 3-O-(alpha-D-mannosyl)-L-seryl-[protein] + a di-trans,poly-cis-dolichyl phosphate + H(+). It catalyses the reaction a di-trans,poly-cis-dolichyl beta-D-mannosyl phosphate + L-threonyl-[protein] = 3-O-(alpha-D-mannosyl)-L-threonyl-[protein] + a di-trans,poly-cis-dolichyl phosphate + H(+). Its pathway is protein modification; protein glycosylation. In terms of biological role, transfers mannosyl residues to the hydroxyl group of serine or threonine residues. The 4 members of the TMTC family are O-mannosyl-transferases dedicated primarily to the cadherin superfamily, each member seems to have a distinct role in decorating the cadherin domains with O-linked mannose glycans at specific regions. Also acts as O-mannosyl-transferase on other proteins such as PDIA3. The polypeptide is Protein O-mannosyl-transferase TMTC4 (Mus musculus (Mouse)).